The sequence spans 757 residues: E3 ubiquitin-protein ligase RNF12-B (757 aa).

Over residues 1-10 (MESADSTGKG) the composition is skewed to polar residues. Disordered stretches follow at residues 1–29 (MESA…LDRE), 68–519 (LQQI…TYES), and 619–652 (EPAE…GGVT). Positions 11 to 21 (STEQSESQRQS) are enriched in low complexity. Polar residues-rich tracts occupy residues 110–138 (SVRQ…NPNS) and 147–163 (INVN…SLDQ). 21 repeat units span residues 197–202 (PESVDE), 203–208 (PVSVAE), 209–214 (PVSVAE), 215–220 (PVSVAE), 221–226 (PESVAE), 227–232 (PESVAA), 237–242 (PESVPE), 243–248 (PESVPE), 249–254 (PESVPE), 255–260 (PESVPE), 261–266 (PESVPE), 267–272 (PESVPE), 273–278 (PESVPE), 279–284 (PESVPE), 285–290 (PESVPE), 291–296 (PESVPE), 297–302 (PESVPE), 303–308 (PESVPE), 309–314 (PESIAE), 315–320 (PESVPV), and 321–326 (PESVPV). Residues 197–326 (PESVDEPVSV…SVPVPESVPV (130 aa)) form a 21 X 6 AA approximate repeats of P-[EV]-S-V-[PA]-[EV] region. Residues 202–237 (EPVSVAEPVSVAEPVSVAEPESVAEPESVAASVPVP) are compositionally biased toward low complexity. The span at 245-313 (SVPEPESVPE…ESVPEPESIA (69 aa)) shows a compositional bias: acidic residues. A compositionally biased stretch (low complexity) spans 314–327 (EPESVPVPESVPVA). Positions 352 to 367 (RSPDQRRTRARTDRSR) are enriched in basic and acidic residues. Over residues 383-392 (HSSSQTVDAS) the composition is skewed to polar residues. The segment covering 408–424 (SSQVHSSSSNETEGSSR) has biased composition (low complexity). A compositionally biased stretch (polar residues) spans 428-452 (HITARQQALGTEGQSQSTVHLSNPE). Residues 453 to 466 (SRSSSQTPQTDSPS) show a composition bias toward low complexity. The span at 467-476 (NAETTGTGQR) shows a compositional bias: polar residues. Basic and acidic residues predominate over residues 490–500 (RPGDYRQRDSI). Polar residues predominate over residues 501–517 (ANRTRSRSQTPNNTVTY). The RING-type; atypical zinc-finger motif lies at 703–744 (CSVCITEYTEGNKLRKLPCSHEYHIHCIDRWLSENSTCPICR). Positions 754 to 757 (ESIV) match the PDZ-binding motif.

This sequence belongs to the RNF12 family. As to quaternary structure, forms homodimers through the C-terminal region. The N-terminus interacts with the homeobox of LIM/homeobox factor lhx1/lim1, with lhx3/lim3 and lhx5/lim5, and with the N-terminus of ldb1. Shows overlapping expression with lhx1/lim1 and ldb1 in the gastrula mesoderm, and expression overlaps with ldb1 throughout early embryogenesis. After gastrulation, expression is gradually restricted to tissues originated from the ectoderm, the neuroectoderm, neural crest and epidermis, and subsequently to the neural tube as well as the head and tailbud region.

It is found in the nucleus. It carries out the reaction S-ubiquitinyl-[E2 ubiquitin-conjugating enzyme]-L-cysteine + [acceptor protein]-L-lysine = [E2 ubiquitin-conjugating enzyme]-L-cysteine + N(6)-ubiquitinyl-[acceptor protein]-L-lysine.. Its pathway is protein modification; protein ubiquitination. Functionally, acts as an E3 ubiquitin-protein ligase specific for ldb1, mediating ubiquitination and proteasome-dependent degradation of excess ldb1 in a RING-dependent manner. Does not degrade ldb1 bound to lhx1/lim1, nor lim1 itself and thus contributes to the establishment of proper ldb1-lhx1/lim1 stoichiometry and the formation of a ldb1-lhx1/lim1 complex. Interferes with Spemann organizer function and suppresses secondary axis formation induced by ldb1 and lhx1/lim1. In Xenopus laevis (African clawed frog), this protein is E3 ubiquitin-protein ligase RNF12-B (rnf12-b).